The following is an 85-amino-acid chain: Putative plasmid stability protein y4jJ (85 aa).

The span at Glu-66 to Pro-78 shows a compositional bias: basic and acidic residues. The disordered stretch occupies residues Glu-66–Glu-85.

The protein to P.syringae pv tomato plasmid stability protein StbC.

In terms of biological role, involved in plasmid stability. This Sinorhizobium fredii (strain NBRC 101917 / NGR234) protein is Putative plasmid stability protein y4jJ.